The primary structure comprises 211 residues: Uridine kinase (211 aa).

Residue 12–19 (GGSGSGKT) participates in ATP binding.

Belongs to the uridine kinase family.

The protein resides in the cytoplasm. It catalyses the reaction uridine + ATP = UMP + ADP + H(+). The enzyme catalyses cytidine + ATP = CMP + ADP + H(+). Its pathway is pyrimidine metabolism; CTP biosynthesis via salvage pathway; CTP from cytidine: step 1/3. It functions in the pathway pyrimidine metabolism; UMP biosynthesis via salvage pathway; UMP from uridine: step 1/1. In Anoxybacillus flavithermus (strain DSM 21510 / WK1), this protein is Uridine kinase.